The following is a 371-amino-acid chain: 4-hydroxy-3-methylbut-2-en-1-yl diphosphate synthase (flavodoxin) (371 aa).

C268, C271, C303, and E310 together coordinate [4Fe-4S] cluster.

The protein belongs to the IspG family. [4Fe-4S] cluster is required as a cofactor.

The catalysed reaction is (2E)-4-hydroxy-3-methylbut-2-enyl diphosphate + oxidized [flavodoxin] + H2O + 2 H(+) = 2-C-methyl-D-erythritol 2,4-cyclic diphosphate + reduced [flavodoxin]. It participates in isoprenoid biosynthesis; isopentenyl diphosphate biosynthesis via DXP pathway; isopentenyl diphosphate from 1-deoxy-D-xylulose 5-phosphate: step 5/6. Converts 2C-methyl-D-erythritol 2,4-cyclodiphosphate (ME-2,4cPP) into 1-hydroxy-2-methyl-2-(E)-butenyl 4-diphosphate. The polypeptide is 4-hydroxy-3-methylbut-2-en-1-yl diphosphate synthase (flavodoxin) (Macrococcus caseolyticus (strain JCSC5402) (Macrococcoides caseolyticum)).